The chain runs to 291 residues: ATP synthase gamma chain (291 aa).

It belongs to the ATPase gamma chain family. F-type ATPases have 2 components, CF(1) - the catalytic core - and CF(0) - the membrane proton channel. CF(1) has five subunits: alpha(3), beta(3), gamma(1), delta(1), epsilon(1). CF(0) has three main subunits: a, b and c.

Its subcellular location is the cell inner membrane. Its function is as follows. Produces ATP from ADP in the presence of a proton gradient across the membrane. The gamma chain is believed to be important in regulating ATPase activity and the flow of protons through the CF(0) complex. This is ATP synthase gamma chain from Methylibium petroleiphilum (strain ATCC BAA-1232 / LMG 22953 / PM1).